The primary structure comprises 204 residues: Imidazoleglycerol-phosphate dehydratase (204 aa).

This sequence belongs to the imidazoleglycerol-phosphate dehydratase family.

It is found in the cytoplasm. It catalyses the reaction D-erythro-1-(imidazol-4-yl)glycerol 3-phosphate = 3-(imidazol-4-yl)-2-oxopropyl phosphate + H2O. Its pathway is amino-acid biosynthesis; L-histidine biosynthesis; L-histidine from 5-phospho-alpha-D-ribose 1-diphosphate: step 6/9. The polypeptide is Imidazoleglycerol-phosphate dehydratase (Rhodococcus erythropolis (strain PR4 / NBRC 100887)).